A 520-amino-acid chain; its full sequence is Cholesterol side-chain cleavage enzyme, mitochondrial (520 aa).

The transit peptide at 1-39 (MLARGLPLRSALVKACPPILSTVGEGWGHHRVGTGEGAG) directs the protein to the mitochondrion. Position 461 (Cys-461) interacts with heme.

It belongs to the cytochrome P450 family. In terms of assembly, interacts with FDX1/adrenodoxin. Heme serves as cofactor. As to expression, detected in adrenal cortex and corpus luteum (at protein level).

The protein localises to the mitochondrion inner membrane. The catalysed reaction is 6 reduced [adrenodoxin] + cholesterol + 3 O2 + 6 H(+) = 4-methylpentanal + pregnenolone + 6 oxidized [adrenodoxin] + 4 H2O. It catalyses the reaction 2 reduced [adrenodoxin] + cholesterol + O2 + 2 H(+) = (22R)-hydroxycholesterol + 2 oxidized [adrenodoxin] + H2O. The enzyme catalyses (22R)-hydroxycholesterol + 2 reduced [adrenodoxin] + O2 + 2 H(+) = (20R,22R)-20,22-dihydroxycholesterol + 2 oxidized [adrenodoxin] + H2O. It carries out the reaction (20R,22R)-20,22-dihydroxycholesterol + 2 reduced [adrenodoxin] + O2 + 2 H(+) = 4-methylpentanal + pregnenolone + 2 oxidized [adrenodoxin] + 2 H2O. The protein operates within lipid metabolism; C21-steroid hormone metabolism. It functions in the pathway steroid metabolism; cholesterol metabolism. In terms of biological role, a cytochrome P450 monooxygenase that catalyzes the side-chain hydroxylation and cleavage of cholesterol to pregnenolone, the precursor of most steroid hormones. Catalyzes three sequential oxidation reactions of cholesterol, namely the hydroxylation at C22 followed with the hydroxylation at C20 to yield 20R,22R-hydroxycholesterol that is further cleaved between C20 and C22 to yield the C21-steroid pregnenolone and 4-methylpentanal. Mechanistically, uses molecular oxygen inserting one oxygen atom into a substrate and reducing the second into a water molecule. Two electrons are provided by NADPH via a two-protein mitochondrial transfer system comprising flavoprotein FDXR (adrenodoxin/ferredoxin reductase) and nonheme iron-sulfur protein FDX1 or FDX2 (adrenodoxin/ferredoxin). The protein is Cholesterol side-chain cleavage enzyme, mitochondrial (CYP11A1) of Bos taurus (Bovine).